We begin with the raw amino-acid sequence, 305 residues long: Ribosomal RNA small subunit methyltransferase H (305 aa).

S-adenosyl-L-methionine contacts are provided by residues 47–49, aspartate 66, phenylalanine 93, aspartate 108, and glutamine 115; that span reads GGH. The interval 280-305 is disordered; sequence ASAEEQERNPRSRSAKLRIARKRSES. The segment covering 290-305 has biased composition (basic residues); sequence RSRSAKLRIARKRSES.

The protein belongs to the methyltransferase superfamily. RsmH family.

The protein resides in the cytoplasm. It catalyses the reaction cytidine(1402) in 16S rRNA + S-adenosyl-L-methionine = N(4)-methylcytidine(1402) in 16S rRNA + S-adenosyl-L-homocysteine + H(+). Specifically methylates the N4 position of cytidine in position 1402 (C1402) of 16S rRNA. This is Ribosomal RNA small subunit methyltransferase H from Synechococcus sp. (strain WH7803).